The sequence spans 261 residues: Basic leucine zipper 19 (261 aa).

Disordered stretches follow at residues 1–22 (MEDG…MGEL) and 74–100 (ESDE…LGNR). A compositionally biased stretch (polar residues) spans 8–18 (FSNQEVFSSSE). Positions 88-100 (CGKKGEKRPLGNR) are enriched in basic and acidic residues. One can recognise a bZIP domain in the interval 89–155 (GKKGEKRPLG…SRLKCLLVDL (67 aa)). The interval 90–113 (KKGEKRPLGNREAVRKYREKKKAK) is basic motif. Residues 117 to 131 (LEDEVARLRAVNQQL) form a leucine-zipper region. Positions 237–248 (NGSFSNVNTSVS) are enriched in low complexity. The segment at 237–261 (NGSFSNVNTSVSNKRKGGHRASRAV) is disordered. The segment covering 249 to 261 (NKRKGGHRASRAV) has biased composition (basic residues).

It localises to the nucleus. In terms of biological role, transcription factor involved in the response to zinc ion deficiency. Binds to the consensus sequence 5'-[AG]TGTCGACA[CT]-3' also called zinc deficiency response element (ZDRE). The ZDRE sequence is conserved in the plant kingdom and present in the promoters of genes that constitute the primary response to zinc deficiency, comprising additional ZIP metal transporter genes. Required for zinc accumulation in roots. Mediates the expression of the zinc transporters ZIP3, ZIP4, ZIP5 and ZIP9 during growth in zinc-deficient conditions. ZIP9 transporter is involved in zinc uptake in roots. This chain is Basic leucine zipper 19, found in Arabidopsis thaliana (Mouse-ear cress).